A 323-amino-acid chain; its full sequence is NADH-cytochrome b5 reductase 2 (323 aa).

A helical transmembrane segment spans residues 32–48 (LAPIYLGVGLIGLGVGL). The FAD-binding FR-type domain occupies 72–177 (QGWVDLKLAQ…KGPIPKYPWE (106 aa)). Position 180-215 (180-215 (KHKHICLIAGGTGITPMYQLARKIFKDPEDQTKVTL)) interacts with FAD.

Belongs to the flavoprotein pyridine nucleotide cytochrome reductase family. Requires FAD as cofactor.

It is found in the mitochondrion outer membrane. The enzyme catalyses 2 Fe(III)-[cytochrome b5] + NADH = 2 Fe(II)-[cytochrome b5] + NAD(+) + H(+). May mediate the reduction of outer membrane cytochrome b5. The chain is NADH-cytochrome b5 reductase 2 (mcr1) from Aspergillus fumigatus (strain ATCC MYA-4609 / CBS 101355 / FGSC A1100 / Af293) (Neosartorya fumigata).